Here is a 2278-residue protein sequence, read N- to C-terminus: Genome polyprotein (2278 aa).

The region spanning 454 to 609 is the SF3 helicase domain; sequence LESTANSIRS…EDWKKKNPGK (156 aa). 481 to 488 serves as a coordination point for ATP; it reads GPPGIGKT. The disordered stretch occupies residues 939–958; it reads EEAKGKTKHGRGAKHARRGG. Over residues 944–956 the composition is skewed to basic residues; it reads KTKHGRGAKHARR. O-(5'-phospho-RNA)-tyrosine is present on tyrosine 966. The Peptidase C24 domain maps to 1056-1204; it reads APTPIVTFTS…TKLAQRVTKT (149 aa). Active-site for 3CLpro activity residues include histidine 1086, glutamate 1107, and cysteine 1171. Residues 1443–1568 form the RdRp catalytic domain; that stretch reads GVLYCLDYSK…SVCPATASIF (126 aa).

As to quaternary structure, homodimer. Homomultimer. Post-translationally, specific enzymatic cleavages in vivo yield mature proteins. Pro-Pol is first autocatalytically cleaved, then processes the whole polyprotein. In terms of processing, VPg is uridylylated by the polymerase and is covalently attached to the 5'-end of the polyadenylated genomic and subgenomic RNAs. This uridylylated form acts as a nucleotide-peptide primer for the polymerase.

The protein resides in the virion. The protein localises to the host cytoplasm. The enzyme catalyses a ribonucleoside 5'-triphosphate + H2O = a ribonucleoside 5'-diphosphate + phosphate + H(+). It catalyses the reaction RNA(n) + a ribonucleoside 5'-triphosphate = RNA(n+1) + diphosphate. It carries out the reaction Endopeptidase with a preference for cleavage when the P1 position is occupied by Glu-|-Xaa and the P1' position is occupied by Gly-|-Yaa.. In terms of biological role, together with NTPase and NS4, initiates the formation of the replication complex. Induces the proliferation of the host smooth ER membranes forming long tubular structures. These remodeled membranes probably form the viral factories that contain the replication complex. Functionally, displays NTPase activity, but no helicase activity. Induces the formation of convoluted membranes derived from the host ER. These remodeled membranes probably form the viral factories that contain the replication complex. Together with NS2 and NS4, initiates the formation of the replication complex. Its function is as follows. Probable key protein responsible for the formation of membrane alterations by the virus. Induces the formation of convoluted membranes derived from the host ER. These remodeled membranes probably form the viral factories that contain the replication complex. Together with NS2 and NTPase, initiates the formation of the replication complex. Viral genome-linked protein is covalently linked to the 5'-end of the positive-strand, negative-strand genomic RNAs and subgenomic RNA. Acts as a genome-linked replication primer. May recruit ribosome to viral RNA thereby promoting viral proteins translation. Interacts with host translation initiation complex to allow the translation of viral proteins. In terms of biological role, protease-polymerase p76 processes the polyprotein: Pro-Pol is first released by autocleavage, then all other proteins are cleaved. Cleaves host translation initiation factor eIF4G1, eIF4G2 and PABP1 thereby inducing a shutdown of host protein synthesis. This shutdown may not prevent viral mRNA from being translated since viral Vpg replaces the cap. It is also an RNA-directed RNA polymerase which replicates genomic and antigenomic viral RNA by recognizing specific signals. Also transcribes a subgenomic mRNA by initiating RNA synthesis internally on antigenomic RNA. This sgRNA codes for structural proteins. Catalyzes the covalent attachment VPg with viral RNAs. Functionally, capsid protein self assembles to form an icosahedral capsid with a T=3 symmetry, about 38 nm in diameter, and consisting of 180 capsid proteins. The capsid encapsulate the genomic RNA and VP2 proteins. Attaches virion to target cells, inducing endocytosis of the viral particle. Acidification of the endosome induces conformational change of capsid protein thereby injecting virus genomic RNA into host cytoplasm. This Homo sapiens (Human) protein is Genome polyprotein.